The chain runs to 725 residues: Beta-adducin (725 aa).

Positions 1 to 22 (MSEDTVPEAASPPPSQGQHYFD) are disordered. Phosphoserine is present on residues serine 11 and serine 25. Threonine 55 is subject to Phosphothreonine. Phosphoserine occurs at positions 60 and 344. The interaction with calmodulin stretch occupies residues 425–444 (KQQKEKTRWLNTPNTYLRVN). The segment at 525–725 (AEKSRSPSTE…KSKKKEKVES (201 aa)) is disordered. Phosphoserine is present on residues serine 530 and serine 532. Threonine 533 carries the post-translational modification Phosphothreonine. Phosphoserine is present on serine 535. The residue at position 561 (threonine 561) is a Phosphothreonine. Residues 566–589 (EEYKKEVERKKLEQEQEGEKDIAT) are compositionally biased toward basic and acidic residues. 4 positions are modified to phosphoserine: serine 594, serine 598, serine 602, and serine 606. Residues 596–621 (VKSTPASPVQSPSKAGTKSPAVSPSK) show a composition bias toward polar residues. The residue at position 612 (threonine 612) is a Phosphothreonine. Residues serine 614, serine 618, and serine 620 each carry the phosphoserine modification. A compositionally biased stretch (basic and acidic residues) spans 622–631 (TSEDTKKTEV). Threonine 674 is subject to Phosphothreonine. Serine 678, serine 685, serine 688, serine 692, serine 696, serine 698, serine 700, serine 702, and serine 712 each carry phosphoserine. Positions 687-700 (TSGPLSPEGSPSKS) are enriched in low complexity. Basic residues predominate over residues 701–725 (PSKKKKKFRTPSFLKKSKKKEKVES). The segment at 703 to 720 (KKKKKFRTPSFLKKSKKK) is interaction with calmodulin.

It belongs to the aldolase class II family. Adducin subfamily. In terms of assembly, found in a complex with ADD2, DMTN and SLC2A1. Interacts with SLC2A1. Heterodimer of an alpha and a beta subunit.

It is found in the cytoplasm. The protein resides in the cytoskeleton. Its subcellular location is the cell membrane. Membrane-cytoskeleton-associated protein that promotes the assembly of the spectrin-actin network. Binds to the erythrocyte membrane receptor SLC2A1/GLUT1 and may therefore provide a link between the spectrin cytoskeleton to the plasma membrane. Binds to calmodulin. Calmodulin binds preferentially to the beta subunit. This Mus musculus (Mouse) protein is Beta-adducin (Add2).